Reading from the N-terminus, the 1075-residue chain is DNA-directed RNA polymerase subunit beta (1075 aa).

Belongs to the RNA polymerase beta chain family. In terms of assembly, in plastids the minimal PEP RNA polymerase catalytic core is composed of four subunits: alpha, beta, beta', and beta''. When a (nuclear-encoded) sigma factor is associated with the core the holoenzyme is formed, which can initiate transcription.

It is found in the plastid. It localises to the chloroplast. It catalyses the reaction RNA(n) + a ribonucleoside 5'-triphosphate = RNA(n+1) + diphosphate. In terms of biological role, DNA-dependent RNA polymerase catalyzes the transcription of DNA into RNA using the four ribonucleoside triphosphates as substrates. This chain is DNA-directed RNA polymerase subunit beta, found in Saccharum officinarum (Sugarcane).